The following is a 207-amino-acid chain: Nudix hydrolase 4 (207 aa).

One can recognise a Nudix hydrolase domain in the interval 58–194; it reads GYRQVVGCVP…WMREALEAFI (137 aa). Residues 101 to 122 carry the Nudix box motif; that stretch reads GGWETDESMEEAALRETIEEAG. Mg(2+)-binding residues include Glu116 and Glu120.

This sequence belongs to the Nudix hydrolase family. Requires Mg(2+) as cofactor. It depends on Mn(2+) as a cofactor. Expressed in roots, stems and leaves.

The enzyme catalyses ADP-D-ribose + H2O = D-ribose 5-phosphate + AMP + 2 H(+). It catalyses the reaction NAD(+) + H2O = beta-nicotinamide D-ribonucleotide + AMP + 2 H(+). It carries out the reaction NADH + H2O = reduced beta-nicotinamide D-ribonucleotide + AMP + 2 H(+). Its function is as follows. Probably mediates the hydrolysis of some nucleoside diphosphate derivatives. In vitro, it can use both NADH and ADP-ribose as substrates; however the relevance of such substrates in vivo is unclear. The sequence is that of Nudix hydrolase 4 (NUDT4) from Arabidopsis thaliana (Mouse-ear cress).